Consider the following 625-residue polypeptide: pH-response transcription factor pacC/RIM101 (625 aa).

Over residues 1–34 (MSSQDQQQQQQPAQTQTSTSSSSNNENATTATSS) the composition is skewed to low complexity. The disordered stretch occupies residues 1-35 (MSSQDQQQQQQPAQTQTSTSSSSNNENATTATSSI). C2H2-type zinc fingers lie at residues 45–70 (LLCQWEKCSERCPTPEALFDHICEKH), 81–105 (LTCGWNSCRTTTVKRDHITSHIRVH), and 111–133 (HKCEFCGKAFKRPQDLKKHVKTH). Over residues 391 to 416 (APMTATHSSHSVSSGTPALTPPSSSV) the composition is skewed to polar residues. The interval 391-440 (APMTATHSSHSVSSGTPALTPPSSSVSYTSGNSPMSSSGMSPISRHSSTS) is disordered. Low complexity predominate over residues 417-438 (SYTSGNSPMSSSGMSPISRHSS). Residues 444–447 (YPNL) carry the YPX[LI] motif 1 motif. Disordered stretches follow at residues 455-543 (SPHH…SPSV) and 584-625 (VKDE…DDDE). Composition is skewed to polar residues over residues 461-472 (TAPTSTLGTNFD) and 490-514 (GLNSSQYRESMETSTVGSPTPSPKE). The short motif at 615-618 (YPVL) is the YPX[LI] motif 2 element.

The protein belongs to the pacC/RIM101 family. Post-translationally, activated by C-terminal proteolytic cleavage by signaling protease (probably palB/RIM13) at neutral to alkaline ambient pH.

It localises to the cytoplasm. Its subcellular location is the nucleus. Functionally, transcription factor that mediates regulation of both acid- and alkaline-expressed genes in response to ambient pH. At alkaline ambient pH, activates transcription of alkaline-expressed genes (including pac1 itself) and represses transcription of acid-expressed genes. The protein is pH-response transcription factor pacC/RIM101 (pac1) of Sclerotinia sclerotiorum (White mold).